A 225-amino-acid polypeptide reads, in one-letter code: Heptaprenylglyceryl phosphate synthase (225 aa).

Lys-6 contributes to the sn-glycerol 1-phosphate binding site. Mg(2+)-binding residues include Asp-8 and Thr-34. Residues 153–158 (YVEYSG), Gly-183, and 203–204 (GN) each bind sn-glycerol 1-phosphate.

It belongs to the GGGP/HepGP synthase family. Group I subfamily. As to quaternary structure, homodimer. The cofactor is Mg(2+).

It carries out the reaction sn-glycerol 1-phosphate + all-trans-heptaprenyl diphosphate = 3-heptaprenyl-sn-glycero-1-phosphate + diphosphate. It functions in the pathway membrane lipid metabolism; glycerophospholipid metabolism. Its function is as follows. Prenyltransferase that catalyzes in vivo the transfer of the heptaprenyl moiety of heptaprenyl pyrophosphate (HepPP; 35 carbon atoms) to the C3 hydroxyl of sn-glycerol-1-phosphate (G1P), producing heptaprenylglyceryl phosphate (HepGP). This reaction is an ether-bond-formation step in the biosynthesis of archaea-type G1P-based membrane lipids found in Bacillales. The protein is Heptaprenylglyceryl phosphate synthase of Listeria monocytogenes serotype 4b (strain CLIP80459).